Reading from the N-terminus, the 371-residue chain is Enterobactin C-glucosyltransferase (371 aa).

Belongs to the glycosyltransferase 28 family.

It localises to the cytoplasm. It catalyses the reaction enterobactin + UDP-alpha-D-glucose = monoglucosyl-enterobactin + UDP. The enzyme catalyses monoglucosyl-enterobactin + UDP-alpha-D-glucose = diglucosyl-enterobactin + UDP + H(+). The catalysed reaction is diglucosyl-enterobactin + UDP-alpha-D-glucose = triglucosyl-enterobactin + UDP + H(+). It participates in siderophore biosynthesis; enterobactin biosynthesis. Its function is as follows. Catalyzes the successive monoglucosylation, diglucosylation and triglucosylation of enterobactin (Ent). Transfers glucosyl groups from uridine-5'-diphosphoglucose (UDP-Glc) to C5 of one, two or three of the 2,3-dihydroxybenzoyl (DHB) units of Ent to yield monoglucosyl-C-Ent (MGE), diglucosyl-C-Ent (DGE) and triglucosyl-C-Ent (TGE). Glucosylation decreases the membrane affinity of Ent and increases the iron acquisition rate. The sequence is that of Enterobactin C-glucosyltransferase from Escherichia coli O6:H1 (strain CFT073 / ATCC 700928 / UPEC).